The primary structure comprises 363 residues: Capsid protein (363 aa).

Positions 72 to 111 (KKVEELNESLKAAILAGAEAEDLRNKLKDISQRYASQLEI) form a coiled coil. Positions 122 to 144 (LKKKGHEQPLTGSGSSEPVHAES) are disordered.

Its subcellular location is the virion. The protein is Capsid protein of Citrus leaf blotch virus (isolate Nagami kumquat/France/SRA-153/1984) (CLBV).